The chain runs to 101 residues: Large ribosomal subunit protein uL23 (101 aa).

Belongs to the universal ribosomal protein uL23 family. Part of the 50S ribosomal subunit. Contacts protein L29, and trigger factor when it is bound to the ribosome.

Functionally, one of the early assembly proteins it binds 23S rRNA. One of the proteins that surrounds the polypeptide exit tunnel on the outside of the ribosome. Forms the main docking site for trigger factor binding to the ribosome. In Thiobacillus denitrificans (strain ATCC 25259 / T1), this protein is Large ribosomal subunit protein uL23.